Reading from the N-terminus, the 214-residue chain is Transcriptional regulatory protein ComA (214 aa).

Residues K3 to L121 enclose the Response regulatory domain. A 4-aspartylphosphate modification is found at D55. The region spanning S147–G212 is the HTH luxR-type domain. The segment at residues N171–T190 is a DNA-binding region (H-T-H motif).

Phosphorylated by ComP.

It is found in the cytoplasm. Its function is as follows. Response regulator in the two-component regulatory system ComP/ComA involved in a major quorum response pathway that regulates the development of genetic competence. Regulates directly the expression of over 20 genes, including genes of the srfA operon, degQ, rapA, rapC, rapE, rapF, etc. Regulates indirectly, through the regulation of comK transcription, the expression of late competence genes. This chain is Transcriptional regulatory protein ComA (comA), found in Bacillus subtilis (strain 168).